We begin with the raw amino-acid sequence, 644 residues long: SPbeta prophage-derived uncharacterized protein YomE (644 aa).

The protein is SPbeta prophage-derived uncharacterized protein YomE (yomE) of Bacillus subtilis (strain 168).